Reading from the N-terminus, the 106-residue chain is Small ribosomal subunit protein uS10 (106 aa).

Belongs to the universal ribosomal protein uS10 family. Part of the 30S ribosomal subunit.

Its function is as follows. Involved in the binding of tRNA to the ribosomes. The sequence is that of Small ribosomal subunit protein uS10 from Hyphomonas neptunium (strain ATCC 15444).